Here is a 78-residue protein sequence, read N- to C-terminus: MLTKVFQSGNSQAVRIPMDFRFDVDTVEIFRKENGDVVLRPVSKKTDDFLALFEGFDETFIQALEARDDLPPQERENL.

Residues 3–44 enclose the SpoVT-AbrB domain; it reads TKVFQSGNSQAVRIPMDFRFDVDTVEIFRKENGDVVLRPVSK.

The protein belongs to the VapB family. In terms of assembly, forms multimers, as well forming as a complex with VapC1.

In terms of biological role, antitoxin component of a type II toxin-antitoxin (TA) system. Upon expression in E.coli neutralizes the effect of toxin VapC1. In vitro inhibits the RNase activity of VapC1. The polypeptide is Antitoxin VapB1 (vapB1) (Haemophilus influenzae (strain R2866)).